Here is a 367-residue protein sequence, read N- to C-terminus: Queuine tRNA-ribosyltransferase (367 aa).

D92 (proton acceptor) is an active-site residue. Substrate contacts are provided by residues 92-96 (DSGGF), D146, Q188, and G215. The RNA binding stretch occupies residues 246-252 (GVGTPKD). The Nucleophile role is filled by D265. Zn(2+)-binding residues include C303, C305, C308, and H334.

This sequence belongs to the queuine tRNA-ribosyltransferase family. Homodimer. Within each dimer, one monomer is responsible for RNA recognition and catalysis, while the other monomer binds to the replacement base PreQ1. Zn(2+) serves as cofactor.

It carries out the reaction 7-aminomethyl-7-carbaguanine + guanosine(34) in tRNA = 7-aminomethyl-7-carbaguanosine(34) in tRNA + guanine. The protein operates within tRNA modification; tRNA-queuosine biosynthesis. Functionally, catalyzes the base-exchange of a guanine (G) residue with the queuine precursor 7-aminomethyl-7-deazaguanine (PreQ1) at position 34 (anticodon wobble position) in tRNAs with GU(N) anticodons (tRNA-Asp, -Asn, -His and -Tyr). Catalysis occurs through a double-displacement mechanism. The nucleophile active site attacks the C1' of nucleotide 34 to detach the guanine base from the RNA, forming a covalent enzyme-RNA intermediate. The proton acceptor active site deprotonates the incoming PreQ1, allowing a nucleophilic attack on the C1' of the ribose to form the product. After dissociation, two additional enzymatic reactions on the tRNA convert PreQ1 to queuine (Q), resulting in the hypermodified nucleoside queuosine (7-(((4,5-cis-dihydroxy-2-cyclopenten-1-yl)amino)methyl)-7-deazaguanosine). This is Queuine tRNA-ribosyltransferase from Francisella tularensis subsp. holarctica (strain FTNF002-00 / FTA).